A 59-amino-acid polypeptide reads, in one-letter code: Large ribosomal subunit protein uL30 (59 aa).

The protein belongs to the universal ribosomal protein uL30 family. As to quaternary structure, part of the 50S ribosomal subunit.

The polypeptide is Large ribosomal subunit protein uL30 (Citrobacter koseri (strain ATCC BAA-895 / CDC 4225-83 / SGSC4696)).